The chain runs to 156 residues: 6,7-dimethyl-8-ribityllumazine synthase (156 aa).

Residues F22, 57–59 (AYE), and 81–83 (TVI) contribute to the 5-amino-6-(D-ribitylamino)uracil site. Residue 86–87 (GT) participates in (2S)-2-hydroxy-3-oxobutyl phosphate binding. The active-site Proton donor is the H89. Residue F114 participates in 5-amino-6-(D-ribitylamino)uracil binding. R128 contacts (2S)-2-hydroxy-3-oxobutyl phosphate.

Belongs to the DMRL synthase family. Forms an icosahedral capsid composed of 60 subunits, arranged as a dodecamer of pentamers.

The enzyme catalyses (2S)-2-hydroxy-3-oxobutyl phosphate + 5-amino-6-(D-ribitylamino)uracil = 6,7-dimethyl-8-(1-D-ribityl)lumazine + phosphate + 2 H2O + H(+). It functions in the pathway cofactor biosynthesis; riboflavin biosynthesis; riboflavin from 2-hydroxy-3-oxobutyl phosphate and 5-amino-6-(D-ribitylamino)uracil: step 1/2. In terms of biological role, catalyzes the formation of 6,7-dimethyl-8-ribityllumazine by condensation of 5-amino-6-(D-ribitylamino)uracil with 3,4-dihydroxy-2-butanone 4-phosphate. This is the penultimate step in the biosynthesis of riboflavin. The protein is 6,7-dimethyl-8-ribityllumazine synthase of Cronobacter sakazakii (strain ATCC BAA-894) (Enterobacter sakazakii).